The following is a 128-amino-acid chain: Probable 4-amino-4-deoxy-L-arabinose-phosphoundecaprenol flippase subunit ArnF (128 aa).

Over 1–2 (MG) the chain is Cytoplasmic. A helical membrane pass occupies residues 3-23 (LMWGLFSVIIASAAQLSLGFA). Over 24 to 35 (ASHLPPMTHLWD) the chain is Periplasmic. The helical transmembrane segment at 36–56 (FIAALLAFGLDARILLLGLLG) threads the bilayer. The Cytoplasmic portion of the chain corresponds to 57-76 (YLLSVFCWYKTLHKLALSKA). A helical membrane pass occupies residues 77–97 (YALLSMSYVLVWIASMVLPGW). Over 98-100 (EGT) the chain is Periplasmic. Residues 101–121 (FSLKALLGVACIMSGLMLIFL) form a helical membrane-spanning segment. The Cytoplasmic portion of the chain corresponds to 122–128 (PTTKQRY).

Belongs to the ArnF family. Heterodimer of ArnE and ArnF.

It is found in the cell inner membrane. It participates in bacterial outer membrane biogenesis; lipopolysaccharide biosynthesis. Its function is as follows. Translocates 4-amino-4-deoxy-L-arabinose-phosphoundecaprenol (alpha-L-Ara4N-phosphoundecaprenol) from the cytoplasmic to the periplasmic side of the inner membrane. The polypeptide is Probable 4-amino-4-deoxy-L-arabinose-phosphoundecaprenol flippase subunit ArnF (Escherichia coli O127:H6 (strain E2348/69 / EPEC)).